The primary structure comprises 440 residues: L-gulonolactone oxidase (440 aa).

The FAD-binding PCMH-type domain maps to 17–187; that stretch reads YSCEPELYFE…LNVTIQCVPA (171 aa). Pros-8alpha-FAD histidine is present on histidine 54. Residues 245–267 form a helical membrane-spanning segment; that stretch reads WFWNYAIGYYLLEFLLWISVFVP.

It belongs to the oxygen-dependent FAD-linked oxidoreductase family. FAD is required as a cofactor.

The protein resides in the microsome membrane. It localises to the endoplasmic reticulum membrane. The catalysed reaction is L-gulono-1,4-lactone + O2 = L-ascorbate + H2O2 + H(+). The protein operates within cofactor biosynthesis; L-ascorbate biosynthesis via UDP-alpha-D-glucuronate pathway; L-ascorbate from UDP-alpha-D-glucuronate: step 4/4. In terms of biological role, oxidizes L-gulono-1,4-lactone to hydrogen peroxide and L-xylo-hexulonolactone which spontaneously isomerizes to L-ascorbate. The chain is L-gulonolactone oxidase (GULO) from Scyliorhinus torazame (Cloudy catshark).